We begin with the raw amino-acid sequence, 257 residues long: Large ribosomal subunit protein uL3 (257 aa).

The tract at residues 232 to 257 is disordered; sequence LKAPKKQKTKVETNQVNPKIEEEKTK.

It belongs to the universal ribosomal protein uL3 family. Part of the 50S ribosomal subunit. Forms a cluster with proteins L14 and L19.

In terms of biological role, one of the primary rRNA binding proteins, it binds directly near the 3'-end of the 23S rRNA, where it nucleates assembly of the 50S subunit. The protein is Large ribosomal subunit protein uL3 of Mycoplasma genitalium (strain ATCC 33530 / DSM 19775 / NCTC 10195 / G37) (Mycoplasmoides genitalium).